We begin with the raw amino-acid sequence, 553 residues long: ATP synthase F(1) complex subunit alpha, mitochondrial (553 aa).

The N-terminal 43 residues, 1–43, are a transit peptide targeting the mitochondrion; that stretch reads MLSVRIAAAVARALPRRAGLVSKNALGSSFVGTRNLHASNTRL. 2 positions are modified to phosphoserine: S53 and S65. A Phosphoserine; alternate modification is found at S76. O-linked (GlcNAc) serine; alternate glycosylation occurs at S76. S106 bears the Phosphoserine mark. An N6-acetyllysine mark is found at K123, K126, and K132. T134 bears the Phosphothreonine mark. N6-acetyllysine; alternate is present on K161. K161 bears the N6-succinyllysine; alternate mark. S166 is modified (phosphoserine). K167 is subject to N6-acetyllysine; alternate. Position 167 is an N6-succinyllysine; alternate (K167). S184 carries the post-translational modification Phosphoserine. R204 carries the post-translational modification Omega-N-methylarginine. 5 residues coordinate ATP: Q215, G217, K218, T219, and S220. Mg(2+) is bound at residue T219. Residues K230 and K239 each carry the N6-acetyllysine; alternate modification. Residues K230 and K239 each carry the N6-succinyllysine; alternate modification. K240 carries the post-translational modification N6-acetyllysine. N6-acetyllysine; alternate is present on residues K261 and K305. N6-succinyllysine; alternate is present on residues K261 and K305. A Mg(2+)-binding site is contributed by D312. Position 427 is an N6-acetyllysine; alternate (K427). K427 carries the post-translational modification N6-succinyllysine; alternate. At K434 the chain carries N6-acetyllysine. Residues Q473 and Q475 each coordinate ATP. K498, K506, K531, and K539 each carry N6-acetyllysine; alternate. K498, K506, K531, and K539 each carry N6-succinyllysine; alternate. Position 541 is an N6-acetyllysine (K541).

The protein belongs to the ATPase alpha/beta chains family. As to quaternary structure, homotrimer. Component of the ATP synthase complex composed at least of ATP5F1A/subunit alpha, ATP5F1B/subunit beta, ATP5MC1/subunit c (homooctomer), MT-ATP6/subunit a, MT-ATP8/subunit 8, ATP5ME/subunit e, ATP5MF/subunit f, ATP5MG/subunit g, ATP5MK/subunit k, ATP5MJ/subunit j, ATP5F1C/subunit gamma, ATP5F1D/subunit delta, ATP5F1E/subunit epsilon, ATP5PF/subunit F6, ATP5PB/subunit b, ATP5PD/subunit d, ATP5PO/subunit OSCP. ATP synthase complex consists of a soluble F(1) head domain (subunits alpha(3) and beta(3)) - the catalytic core - and a membrane F(0) domain - the membrane proton channel (subunits c, a, 8, e, f, g, k and j). These two domains are linked by a central stalk (subunits gamma, delta, and epsilon) rotating inside the F1 region and a stationary peripheral stalk (subunits F6, b, d, and OSCP). Interacts with ATPAF2. Interacts with HRG; the interaction occurs on the surface of T-cells and alters the cell morphology when associated with concanavalin (in vitro). Interacts with PLG (angiostatin peptide); the interaction inhibits most of the angiogenic properties of angiostatin. Interacts with BLOC1S1. Interacts with BCL2L1 isoform BCL-X(L); the interaction mediates the association of BCL2L1 isoform BCL-X(L) with the mitochondrial membrane F(1)F(0) ATP synthase and enhances neurons metabolic efficiency. Interacts with CLN5 and PPT1. Interacts with S100A1; this interaction increases F1-ATPase activity. Interacts with ABCB7; this interaction allows the regulation of cellular iron homeostasis and cellular reactive oxygen species (ROS) levels in cardiomyocytes. In terms of processing, acetylated on lysine residues. BLOC1S1 is required for acetylation. In terms of tissue distribution, expressed in flagella of epididymal sperm.

Its subcellular location is the mitochondrion. It localises to the mitochondrion inner membrane. The protein localises to the cell membrane. Its function is as follows. Subunit alpha, of the mitochondrial membrane ATP synthase complex (F(1)F(0) ATP synthase or Complex V) that produces ATP from ADP in the presence of a proton gradient across the membrane which is generated by electron transport complexes of the respiratory chain. ATP synthase complex consist of a soluble F(1) head domain - the catalytic core - and a membrane F(1) domain - the membrane proton channel. These two domains are linked by a central stalk rotating inside the F(1) region and a stationary peripheral stalk. During catalysis, ATP synthesis in the catalytic domain of F(1) is coupled via a rotary mechanism of the central stalk subunits to proton translocation. In vivo, can only synthesize ATP although its ATP hydrolase activity can be activated artificially in vitro. With the catalytic subunit beta (ATP5F1B), forms the catalytic core in the F(1) domain. Subunit alpha does not bear the catalytic high-affinity ATP-binding sites. The sequence is that of ATP synthase F(1) complex subunit alpha, mitochondrial from Rattus norvegicus (Rat).